The sequence spans 588 residues: Protein POF1B (588 aa).

Coiled coils occupy residues 332–442 and 502–530; these read STFS…VSET and LHELTSLLEEKDSLIKRQSEELSKLRQEI.

Interacts with nonmuscle actin.

It localises to the cell junction. The protein resides in the tight junction. Functionally, plays a key role in the organization of epithelial monolayers by regulating the actin cytoskeleton. May be involved in ovary development. The polypeptide is Protein POF1B (POF1B) (Pongo abelii (Sumatran orangutan)).